Here is a 217-residue protein sequence, read N- to C-terminus: GTP cyclohydrolase 1 (217 aa).

Cys-108, His-111, and Cys-179 together coordinate Zn(2+).

It belongs to the GTP cyclohydrolase I family. Toroid-shaped homodecamer, composed of two pentamers of five dimers.

The catalysed reaction is GTP + H2O = 7,8-dihydroneopterin 3'-triphosphate + formate + H(+). It functions in the pathway cofactor biosynthesis; 7,8-dihydroneopterin triphosphate biosynthesis; 7,8-dihydroneopterin triphosphate from GTP: step 1/1. This chain is GTP cyclohydrolase 1, found in Shewanella denitrificans (strain OS217 / ATCC BAA-1090 / DSM 15013).